Reading from the N-terminus, the 65-residue chain is Beta-defensin 106A (65 aa).

The signal sequence occupies residues 1 to 20; the sequence is MRTFLFLFAVLFFLTPAKNA. 3 cysteine pairs are disulfide-bonded: C26–C53, C33–C47, and C37–C54.

This sequence belongs to the beta-defensin family. Monomer. Interacts with CCR2 (via extracellular N-terminal region); this interaction may preferentially require specific tyrosine sulfation on CCR2.

The protein resides in the secreted. The protein localises to the membrane. Its function is as follows. Has antibacterial activity. Acts as a ligand for C-C chemokine receptor CCR2. The sequence is that of Beta-defensin 106A (DEFB106A) from Gorilla gorilla gorilla (Western lowland gorilla).